Consider the following 961-residue polypeptide: MWCLHCNSERTQSLLELELDSGVEGEAPSSETGTSLDSPSAYHQGPLVPGSSLSPDHYEHTSVGAYGLYAGPGPQQRTRRPRLQHSTSVLRKQAEEEAIKRSRSLSESYELSSDLQDKQVEMLERKYGGRLVTRHAARTIQTAFRQYQMNKNFERLRSSMSENRMSRRIVLSNMRMQFSFEGPEKVHSSYFEGKQVSVTNDGSQLGALVPSECGDLSDPALKSPAPSSDFADAITELEDAFSRQVKSLAESIDDALNCRSLHSEEVPASDTARARDTEPKPGLHGMDHRKLDEMTASYSDVTLYIDEEELSPPLPLSQAGDRPSSTESDLRLRSGGAAQDYWALAHKEDKADTDTSCRSTPSLERPEPRLRVEHLPLLTIEPPSDSSVELSDRSDRSSLKRQSAYERSLGGQQGSPKHGPHGGPPKGLPREEPELRPRPPRPLESHLAINGSANRQSKSESDYSDGDNDSINSTSNSNDTINCSSESSSRDSLREQTLSKQTYHKETRNSWDSPAFSNDVIRKRHYRIGLNLFNKKPEKGIQYLIERGFVPDTPVGVAHFLLQRKGLSRQMIGEFLGNRQKQFNRDVLDCVVDEMDFSAMELDEALRKFQAHIRVQGEAQKVERLIEAFSQRYCVCNPGVVRQFRNPDTIFILAFAIILLNTDMYSPNVKPERKMKLEDFVKNLRGVDDGEDIPRETLIGIYERIRKRELKTNEDHVSQVQKVEKLIVGKKPIGSLHHGLGCVLSLPHRRLVCYCRLFEVPDPNKPQKLGLHQREIFLFNDLLVVTKIFQKKKNSVTYSFRQSFSLYGMQVLLFENQYYPNGIRLTSAVPGADIKVLINFNAPNPQDRKKFTDDLRESVAEVQEMEKHRIESELEKQKGVVRPSMSQCSSLKKESGNGTLSRACLDDSYASGEGLKRSALSSSLRDLSEAGKRGRRSSAGSLESNVEFQPFQPPQPPVLCS.

Residues 21 to 113 are disordered; sequence SGVEGEAPSS…SLSESYELSS (93 aa). Over residues 29–38 the composition is skewed to polar residues; that stretch reads SSETGTSLDS. 3 positions are modified to phosphoserine: Ser-88, Ser-104, and Ser-106. The IQ domain occupies 133 to 162; the sequence is TRHAARTIQTAFRQYQMNKNFERLRSSMSE. 3 positions are modified to phosphoserine: Ser-179, Ser-247, and Ser-251. Disordered regions lie at residues 263 to 291, 310 to 332, and 347 to 515; these read SEEV…HRKL, LSPP…DLRL, and KEDK…DSPA. Basic and acidic residues predominate over residues 272 to 291; it reads ARARDTEPKPGLHGMDHRKL. Composition is skewed to basic and acidic residues over residues 364–374 and 428–444; these read ERPEPRLRVEH and LPRE…RPLE. Low complexity predominate over residues 469–487; sequence DSINSTSNSNDTINCSSES. Phosphoserine occurs at positions 510 and 513. Positions 515-708 constitute an SEC7 domain; that stretch reads AFSNDVIRKR…IGIYERIRKR (194 aa). The 93-residue stretch at 772–864 folds into the PH domain; the sequence is HQREIFLFND…LRESVAEVQE (93 aa). Residues 846-877 adopt a coiled-coil conformation; it reads QDRKKFTDDLRESVAEVQEMEKHRIESELEKQ. Ser-890 bears the Phosphoserine mark. Position 909 is a phosphotyrosine (Tyr-909). A disordered region spans residues 920-961; sequence LSSSLRDLSEAGKRGRRSSAGSLESNVEFQPFQPPQPPVLCS. Ser-922 and Ser-923 each carry phosphoserine. The span at 938–947 shows a compositional bias: polar residues; that stretch reads SAGSLESNVE. Positions 951–961 are enriched in pro residues; the sequence is FQPPQPPVLCS.

Belongs to the BRAG family. Interacts with ARF1 and ARF6. Interacts with GRIA2; the interaction is required for ARF6 activation. Expressed in hippocampus.

It localises to the cytoplasm. The protein resides in the nucleus. Its subcellular location is the postsynaptic density. It is found in the cytoplasmic vesicle. The protein localises to the secretory vesicle. It localises to the synaptic vesicle. Guanine nucleotide exchange factor for ARF1 and ARF6. Guanine nucleotide exchange factor activity is enhanced by lipid binding. Accelerates GTP binding by ARFs of all three classes. Guanine nucleotide exchange protein for ARF6, mediating internalization of beta-1 integrin. Involved in neuronal development. In neurons, plays a role in the control of vesicle formation by endocytoc cargo. Upon long term depression, interacts with GRIA2 and mediates the activation of ARF6 to internalize synaptic AMPAR receptors. The polypeptide is IQ motif and SEC7 domain-containing protein 1 (Iqsec1) (Mus musculus (Mouse)).